The chain runs to 403 residues: MAQNDKIAPQDQDSFLDDQPGVRPIPSFDDMPLHQNLLRGIYSYGFEKPSSIQQRAIAPFTRGGDIIAQAQSGTGKTGAFSIGLLQRLDFRHNLIQGLVLSPTRELALQTAEVISRIGEFLSNSSKFCETFVGGTRVQDDLRKLQAGVIVAVGTPGRVSDVIKRGALRTESLRVLVLDEADEMLSQGFADQIYEIFRFLPKDIQVALFSATMPEEVLELTKKFMRDPVRILVKRESLTLEGIKQFFIAVEEEHKLDTLMDLYETVSIAQSVIFANTRRKVDWIAEKLNQSNHTVSSMHAEMPKSDRERVMNTFRSGSSRVLVTTDLVARGIDVHHVNIVINFDLPTNKENYLHRIGRGGRYGRKGVAINFVTEKDVELLHEIEAHYHTQIDELPVDFAAYLGE.

Positions 1 to 29 (MAQNDKIAPQDQDSFLDDQPGVRPIPSFD) are disordered. A Q motif motif is present at residues 26-54 (PSFDDMPLHQNLLRGIYSYGFEKPSSIQQ). Positions 57-230 (IAPFTRGGDI…KKFMRDPVRI (174 aa)) constitute a Helicase ATP-binding domain. 70–77 (AQSGTGKT) is an ATP binding site. A DEAD box motif is present at residues 178 to 181 (DEAD). Residues 241–401 (GIKQFFIAVE…ELPVDFAAYL (161 aa)) enclose the Helicase C-terminal domain.

It belongs to the DEAD box helicase family. eIF4A subfamily. In terms of assembly, eIF4F is a multi-subunit complex, the composition of which varies with external and internal environmental conditions. It is composed of at least EIF4A, EIF4E and EIF4G.

The enzyme catalyses ATP + H2O = ADP + phosphate + H(+). Its function is as follows. ATP-dependent RNA helicase which is a subunit of the eIF4F complex involved in cap recognition and is required for mRNA binding to ribosome. In the current model of translation initiation, eIF4A unwinds RNA secondary structures in the 5'-UTR of mRNAs which is necessary to allow efficient binding of the small ribosomal subunit, and subsequent scanning for the initiator codon. This Leishmania infantum protein is Probable eukaryotic initiation factor 4A.